The following is a 183-amino-acid chain: Pyruvoyl-dependent arginine decarboxylase 2 (183 aa).

At Ser41 the chain carries Pyruvic acid (Ser).

It belongs to the PdaD family. Requires pyruvate as cofactor.

The enzyme catalyses L-arginine + H(+) = agmatine + CO2. The chain is Pyruvoyl-dependent arginine decarboxylase 2 (pdaD2) from Methanosarcina mazei (strain ATCC BAA-159 / DSM 3647 / Goe1 / Go1 / JCM 11833 / OCM 88) (Methanosarcina frisia).